Consider the following 71-residue polypeptide: Plasticin-C2 (71 aa).

An N-terminal signal peptide occupies residues 1–22 (MAFLKKSLLLVLFLALVPLSIC). Positions 23–45 (EEEKREEEDEEKQEDDDQSENKR) are excised as a propeptide. The disordered stretch occupies residues 25-46 (EKREEEDEEKQEDDDQSENKRG). Positions 26–40 (KREEEDEEKQEDDDQ) are enriched in acidic residues. An Asparagine amide modification is found at asparagine 68. The propeptide occupies 70 to 71 (ES).

It belongs to the frog skin active peptide (FSAP) family. Plasticin subfamily. As to expression, expressed by the skin glands.

The protein localises to the secreted. Its subcellular location is the target cell membrane. In terms of biological role, neutral peptide with no antimicrobial activity. May act in synergy with cationic peptides by enhancing their activity. Has a moderate hemolytic activity. This chain is Plasticin-C2, found in Agalychnis callidryas (Red-eyed tree frog).